The following is a 364-amino-acid chain: D-alanine--D-alanine ligase (364 aa).

One can recognise an ATP-grasp domain in the interval 146 to 352; it reads KLCAADAGVE…FDELISRLLL (207 aa). 179-234 is a binding site for ATP; it reads TERFAFPVFVKPANLGSSVGISKVHNAAELRPALDKACALDAKVLVEETITGREVE. 3 residues coordinate Mg(2+): aspartate 305, glutamate 319, and asparagine 321.

This sequence belongs to the D-alanine--D-alanine ligase family. Mg(2+) serves as cofactor. Mn(2+) is required as a cofactor.

It localises to the cytoplasm. The enzyme catalyses 2 D-alanine + ATP = D-alanyl-D-alanine + ADP + phosphate + H(+). It participates in cell wall biogenesis; peptidoglycan biosynthesis. Cell wall formation. The protein is D-alanine--D-alanine ligase of Chlorobaculum parvum (strain DSM 263 / NCIMB 8327) (Chlorobium vibrioforme subsp. thiosulfatophilum).